A 329-amino-acid chain; its full sequence is MSGLNSIGLGLVGDIGGTNARFALVDFDGADPQLIEPTSYKGEDYGTAEDAIEHYLAKMGLKHPDQAVVAVAGPIEHGAVHFTNSDWKLSEDSLRRAGGFRTARLINDFTAQALAAPRLAPKDLRQIGPLQTSGEGDLAILGPGTGFGAAGMVRRHGVETPLTTEGGHIAFAPFDDTEIEILRVLIKRFGRCSIERLLSGPGMEDLHVILGEIEGRKVDELTAKQITEHAVAGDDCCKVTIERFCAILGSAAGDLALALGARGGVFIAGGIAPRIVDLLEEGEFRARFEAKGRLSDYTRAIPTHVVMNPHTALIGAAVAMTPDGRAAIS.

13-18 serves as a coordination point for ATP; the sequence is GDIGGT.

The protein belongs to the bacterial glucokinase family.

It is found in the cytoplasm. The catalysed reaction is D-glucose + ATP = D-glucose 6-phosphate + ADP + H(+). The chain is Glucokinase from Caulobacter sp. (strain K31).